The primary structure comprises 503 residues: Probable inactive beta-glucosidase 33 (503 aa).

The N-terminal stretch at 1-30 (MATGELALVSSLFIVVVFLLLGAVAREASA) is a signal peptide. A beta-D-glucoside-binding positions include glutamine 50, histidine 150, and 195–196 (NQ). Cysteines 215 and 223 form a disulfide. Asparagine 222 is a glycosylation site (N-linked (GlcNAc...) asparagine). The a beta-D-glucoside site is built by tyrosine 339 and glutamate 399. Residue glutamate 399 is the Nucleophile of the active site. Asparagine 436 is a glycosylation site (N-linked (GlcNAc...) asparagine). Residues tryptophan 446, 453–454 (EF), and phenylalanine 462 each bind a beta-D-glucoside.

This sequence belongs to the glycosyl hydrolase 1 family.

The sequence is that of Probable inactive beta-glucosidase 33 (BGLU33) from Oryza sativa subsp. japonica (Rice).